Here is a 394-residue protein sequence, read N- to C-terminus: Small RNA 2'-O-methyltransferase (394 aa).

2 residues coordinate S-adenosyl-L-methionine: aspartate 78 and serine 114. Residues glutamate 132, glutamate 135, histidine 136, and histidine 181 each coordinate Mg(2+).

Belongs to the methyltransferase superfamily. HEN1 family. Mg(2+) serves as cofactor.

Its subcellular location is the cytoplasm. The catalysed reaction is small RNA 3'-end nucleotide + S-adenosyl-L-methionine = small RNA 3'-end 2'-O-methylnucleotide + S-adenosyl-L-homocysteine + H(+). In terms of biological role, methyltransferase that adds a 2'-O-methyl group at the 3'-end of piRNAs, a class of 24 to 30 nucleotide RNAs that are generated by a Dicer-independent mechanism and are primarily derived from transposons and other repeated sequence elements. This probably protects the 3'-end of piRNAs from uridylation activity and subsequent degradation. Stabilization of piRNAs is essential for gametogenesis. The polypeptide is Small RNA 2'-O-methyltransferase (Henmt1) (Rattus norvegicus (Rat)).